A 341-amino-acid polypeptide reads, in one-letter code: N-acetyl-gamma-glutamyl-phosphate reductase (341 aa).

Residue Cys145 is part of the active site.

Belongs to the NAGSA dehydrogenase family. Type 1 subfamily.

The protein resides in the cytoplasm. The catalysed reaction is N-acetyl-L-glutamate 5-semialdehyde + phosphate + NADP(+) = N-acetyl-L-glutamyl 5-phosphate + NADPH + H(+). It functions in the pathway amino-acid biosynthesis; L-arginine biosynthesis; N(2)-acetyl-L-ornithine from L-glutamate: step 3/4. Its function is as follows. Catalyzes the NADPH-dependent reduction of N-acetyl-5-glutamyl phosphate to yield N-acetyl-L-glutamate 5-semialdehyde. The polypeptide is N-acetyl-gamma-glutamyl-phosphate reductase (Methanothrix thermoacetophila (strain DSM 6194 / JCM 14653 / NBRC 101360 / PT) (Methanosaeta thermophila)).